A 399-amino-acid chain; its full sequence is Syndecan (399 aa).

An N-terminal signal peptide occupies residues 1-28 (MKPKQKISVEPLLLVAILIGVLVAATHA). The tract at residues 28–319 (AQDQKSVKPS…TKGIDHRPNG (292 aa)) is disordered. The Extracellular portion of the chain corresponds to 29–340 (QDQKSVKPSA…TSSFFSQPGI (312 aa)). Over residues 36-46 (PSAAAPSAAAS) the composition is skewed to low complexity. The O-linked (Xyl...) (glycosaminoglycan) serine glycan is linked to serine 62. The span at 67 to 77 (GIHEDLEKDPD) shows a compositional bias: basic and acidic residues. O-linked (Xyl...) (glycosaminoglycan) serine glycans are attached at residues serine 79, serine 81, and serine 110. Over residues 99-116 (SHNTRISQSSNSGINTAH) the composition is skewed to polar residues. Over residues 117-172 (TPTQTSSTIPTTSTSTPMPTTTPTATTPASTTTAAATQISSFANSSSTTTTTLAPT) the composition is skewed to low complexity. N-linked (GlcNAc...) asparagine glycosylation is present at asparagine 160. The segment covering 191–214 (TESSGDGIDADAEDDDEDDGDDKD) has biased composition (acidic residues). The O-linked (Xyl...) (glycosaminoglycan) serine glycan is linked to serine 194. A compositionally biased stretch (basic and acidic residues) spans 215-226 (YDYNKELDKEID). Positions 253 to 270 (DEIDVDGGDEDDNGDSDI) are enriched in acidic residues. The segment covering 299-309 (PNTNVNSQPSD) has biased composition (polar residues). The helical transmembrane segment at 341-365 (LAAVIGGAVVGLLCAILVVMFIVYR) threads the bilayer. Residues 366 to 399 (MRKKDEGSYALDEPKRSPANNSYAKNANNREFYA) lie on the Cytoplasmic side of the membrane. Residues 373 to 399 (SYALDEPKRSPANNSYAKNANNREFYA) form a disordered region. The span at 383–399 (PANNSYAKNANNREFYA) shows a compositional bias: polar residues.

It belongs to the syndecan proteoglycan family. As to expression, in 13-16 hours embryos, expressed in lymph glands, peripheral and central nervous system and basal surfaces of gut epithelia. Sdc and robo are coexpressed in domains adjacent to slit; in tracheal pits and midline glia cells.

It is found in the membrane. In terms of biological role, cell surface proteoglycan that bears heparan sulfate. Required for axonal and myotube guidance, is a necessary component of slit/robo signaling and is required in the slit target cells. In Drosophila melanogaster (Fruit fly), this protein is Syndecan (Sdc).